Reading from the N-terminus, the 226-residue chain is Ribonuclease 3 (226 aa).

One can recognise an RNase III domain in the interval 7 to 129 (LPRLCRTLGY…IIGAIYLDSD (123 aa)). Glutamate 42 serves as a coordination point for Mg(2+). Aspartate 46 is an active-site residue. Mg(2+) contacts are provided by aspartate 115 and glutamate 118. Residue glutamate 118 is part of the active site. The DRBM domain occupies 156–226 (DAKTLLQEYL…AAQVLELLKK (71 aa)).

This sequence belongs to the ribonuclease III family. In terms of assembly, homodimer. It depends on Mg(2+) as a cofactor.

Its subcellular location is the cytoplasm. It carries out the reaction Endonucleolytic cleavage to 5'-phosphomonoester.. In terms of biological role, digests double-stranded RNA. Involved in the processing of primary rRNA transcript to yield the immediate precursors to the large and small rRNAs (23S and 16S). Processes some mRNAs, and tRNAs when they are encoded in the rRNA operon. Processes pre-crRNA and tracrRNA of type II CRISPR loci if present in the organism. In Shewanella sp. (strain MR-7), this protein is Ribonuclease 3.